The primary structure comprises 872 residues: FHIP family protein CBG19667 (872 aa).

Residues 800-841 (SRSSPRSADEHDSTLFYGRSTIPPPGRKPLLREPSHQETLDD) are disordered. Residues 829–841 (LLREPSHQETLDD) are compositionally biased toward basic and acidic residues.

The protein belongs to the FHIP family.

This is FHIP family protein CBG19667 from Caenorhabditis briggsae.